An 86-amino-acid polypeptide reads, in one-letter code: Large ribosomal subunit protein bL31B (86 aa).

The protein belongs to the bacterial ribosomal protein bL31 family. Type B subfamily. In terms of assembly, part of the 50S ribosomal subunit.

The chain is Large ribosomal subunit protein bL31B from Chloroherpeton thalassium (strain ATCC 35110 / GB-78).